We begin with the raw amino-acid sequence, 310 residues long: MGRIDITILGSGSAVPSLHRWHPSILVKDWMGNTVLLDAGEGVQIRLRKVGVSPSSIDVLAITHPHGDHINGVAGLLMTMSLQSRRKPLTIISTSESLEFISETLEATRENLGFEVMLVDARESGVLDVGRPSGDRLTIEWERACHNIESLAFKLVWTLRPRIDARILERLDLKAGPWIRELIEKGRAHVEGRIVTLKDISASGERKYSVAYTGDTSPCTRVAKFLHGSDILIHDSTLDSSLAREAAERGHSTSLDAARNALTSGAKLLILFHVSSRYSGYEARLLLKEARRVFPNTVLSWDGMKLSITI.

Zn(2+) is bound by residues His-64, His-66, Asp-68, His-69, His-146, Asp-215, and His-273. Asp-68 serves as the catalytic Proton acceptor.

Belongs to the RNase Z family. Homodimer. It depends on Zn(2+) as a cofactor.

The enzyme catalyses Endonucleolytic cleavage of RNA, removing extra 3' nucleotides from tRNA precursor, generating 3' termini of tRNAs. A 3'-hydroxy group is left at the tRNA terminus and a 5'-phosphoryl group is left at the trailer molecule.. Its function is as follows. Zinc phosphodiesterase, which displays some tRNA 3'-processing endonuclease activity. Probably involved in tRNA maturation, by removing a 3'-trailer from precursor tRNA. The chain is Ribonuclease Z from Aeropyrum pernix (strain ATCC 700893 / DSM 11879 / JCM 9820 / NBRC 100138 / K1).